The following is a 430-amino-acid chain: MELLHSINDFNEAKQVIAGGVNSPVRAFKSVKGTPPFILKGKGAYLYDVDNNHYIDFVQSWGPLIFGHADEEIEENIINVLKKGTSFGAPTELETTLAKEIISCYEGLDKVRLVNSGTEATMSAIRLARAYSQKDDLIKFEGCYHGHSDSLLVKAGSGCATFGSPSSLGVPNDFSKHTLVARYNDLNSTEECFKKGDVGCVIIEPIAGNMGLVPAQKEFLLGLKALCEKYQAVLILDEVMSGFRASLSGSQEFYGVVPDLVTFGKVIGAGLPLACFGGRAEIMDLLSPIGGVYQAGTLSGNPLAVCAGLSALYKIKRDKTLYTRLNALAVRLTQGLQKSAQNYNIALETLNMGSMFGFFFNENAVRDFDDALKSDTEMFAKFHQKMLFKGVYLACSSFETGFICEPMTEEMIDLAISKADESFDEIINGV.

An N6-(pyridoxal phosphate)lysine modification is found at lysine 265.

This sequence belongs to the class-III pyridoxal-phosphate-dependent aminotransferase family. HemL subfamily. As to quaternary structure, homodimer. Pyridoxal 5'-phosphate is required as a cofactor.

The protein localises to the cytoplasm. The enzyme catalyses (S)-4-amino-5-oxopentanoate = 5-aminolevulinate. It participates in porphyrin-containing compound metabolism; protoporphyrin-IX biosynthesis; 5-aminolevulinate from L-glutamyl-tRNA(Glu): step 2/2. In Helicobacter pylori (strain J99 / ATCC 700824) (Campylobacter pylori J99), this protein is Glutamate-1-semialdehyde 2,1-aminomutase (hemL).